Here is a 183-residue protein sequence, read N- to C-terminus: Adenine phosphoribosyltransferase (183 aa).

The protein belongs to the purine/pyrimidine phosphoribosyltransferase family. Homodimer.

Its subcellular location is the cytoplasm. The enzyme catalyses AMP + diphosphate = 5-phospho-alpha-D-ribose 1-diphosphate + adenine. It participates in purine metabolism; AMP biosynthesis via salvage pathway; AMP from adenine: step 1/1. In terms of biological role, catalyzes a salvage reaction resulting in the formation of AMP, that is energically less costly than de novo synthesis. The protein is Adenine phosphoribosyltransferase of Cronobacter sakazakii (strain ATCC BAA-894) (Enterobacter sakazakii).